The sequence spans 395 residues: 3-sulfinopropanoyl-CoA desulfinase (395 aa).

FAD is bound by residues 121 to 124, S130, and 153 to 156; these read ICIS and YWIT. 243–244 lines the substrate pocket; the sequence is YN. FAD-binding positions include R272, Q339, S343, 366-370, and Q387; that span reads GGTAQ.

It belongs to the acyl-CoA dehydrogenase family. Homotrimer or homotetramer. It depends on FAD as a cofactor.

The catalysed reaction is 3-sulfinopropanoyl-CoA + H2O = propanoyl-CoA + sulfite + H(+). Its function is as follows. Catalyzes the conversion 3-sulfinopropanoyl-CoA (3SP-CoA) to propanoyl-CoA by abstraction of sulfite. Does not show dehydrogenase activity. This chain is 3-sulfinopropanoyl-CoA desulfinase, found in Cupriavidus necator (strain ATCC 43291 / DSM 13513 / CCUG 52238 / LMG 8453 / N-1) (Ralstonia eutropha).